The primary structure comprises 150 residues: Large ribosomal subunit protein uL23m (150 aa).

Belongs to the universal ribosomal protein uL23 family. Component of the mitochondrial ribosome large subunit (39S) which comprises a 16S rRNA and about 50 distinct proteins.

It is found in the mitochondrion. In Drosophila melanogaster (Fruit fly), this protein is Large ribosomal subunit protein uL23m (mRpL23).